A 193-amino-acid chain; its full sequence is Transcriptional repressor NrdR (193 aa).

The segment at 3 to 34 is a zinc-finger region; that stretch reads CPYCGGLDTQVKDSRPSEDASAIRRRRICPDC. The region spanning 49–139 is the ATP-cone domain; it reads LTVVKRSGRK…VYKNFREAKD (91 aa). The segment at 150–193 is disordered; the sequence is DQQDGAVPQAEADRPIGAGPPSEAAQPAAGEGGDAPMRRARSRA.

Belongs to the NrdR family. Requires Zn(2+) as cofactor.

Functionally, negatively regulates transcription of bacterial ribonucleotide reductase nrd genes and operons by binding to NrdR-boxes. The protein is Transcriptional repressor NrdR of Methylobacterium nodulans (strain LMG 21967 / CNCM I-2342 / ORS 2060).